Reading from the N-terminus, the 357-residue chain is Histidinol-phosphate aminotransferase (357 aa).

Lysine 218 carries the post-translational modification N6-(pyridoxal phosphate)lysine.

Belongs to the class-II pyridoxal-phosphate-dependent aminotransferase family. Histidinol-phosphate aminotransferase subfamily. As to quaternary structure, homodimer. It depends on pyridoxal 5'-phosphate as a cofactor.

The catalysed reaction is L-histidinol phosphate + 2-oxoglutarate = 3-(imidazol-4-yl)-2-oxopropyl phosphate + L-glutamate. Its pathway is amino-acid biosynthesis; L-histidine biosynthesis; L-histidine from 5-phospho-alpha-D-ribose 1-diphosphate: step 7/9. The chain is Histidinol-phosphate aminotransferase from Prosthecochloris aestuarii (strain DSM 271 / SK 413).